The following is a 162-amino-acid chain: NADH-quinone oxidoreductase subunit I (162 aa).

4Fe-4S ferredoxin-type domains lie at 52–82 (LRRY…IEAG) and 93–122 (TRYD…EGPN). [4Fe-4S] cluster is bound by residues Cys62, Cys65, Cys68, Cys72, Cys102, Cys105, Cys108, and Cys112.

The protein belongs to the complex I 23 kDa subunit family. In terms of assembly, NDH-1 is composed of 14 different subunits. Subunits NuoA, H, J, K, L, M, N constitute the membrane sector of the complex. The cofactor is [4Fe-4S] cluster.

The protein resides in the cell inner membrane. The catalysed reaction is a quinone + NADH + 5 H(+)(in) = a quinol + NAD(+) + 4 H(+)(out). In terms of biological role, NDH-1 shuttles electrons from NADH, via FMN and iron-sulfur (Fe-S) centers, to quinones in the respiratory chain. The immediate electron acceptor for the enzyme in this species is believed to be ubiquinone. Couples the redox reaction to proton translocation (for every two electrons transferred, four hydrogen ions are translocated across the cytoplasmic membrane), and thus conserves the redox energy in a proton gradient. This Methylobacterium nodulans (strain LMG 21967 / CNCM I-2342 / ORS 2060) protein is NADH-quinone oxidoreductase subunit I.